The following is a 99-amino-acid chain: Acylphosphatase (99 aa).

The 93-residue stretch at 5–97 (IRQVMVRGRV…YAGERFSILS (93 aa)) folds into the Acylphosphatase-like domain. Catalysis depends on residues R20 and N38.

The protein belongs to the acylphosphatase family.

It carries out the reaction an acyl phosphate + H2O = a carboxylate + phosphate + H(+). The chain is Acylphosphatase (acyP) from Rhodopseudomonas palustris (strain BisB5).